A 207-amino-acid polypeptide reads, in one-letter code: Protein Nef (207 aa).

The N-myristoyl glycine; by host moiety is linked to residue glycine 2. A Phosphoserine; by host modification is found at serine 6. The interval 62–66 is acidic; interacts with host PACS1 and PACS2; stabilizes the interaction of NEF/MHC-I with host AP1M1; necessary for MHC-I internalization; sequence EEDSE. Residues 70 to 79 form an SH3-binding; interaction with Src family tyrosine kinases region; it reads PVRPQVPLRP. The PxxP; stabilizes the interaction of NEF/MHC-I with host AP1M1; necessary for MHC-I internalization signature appears at 73–76; that stretch reads PQVP. The segment at 109–125 is mediates dimerization, Nef-PTE1 interaction; the sequence is EILDLWVYNTQGYFPDW. The tract at residues 149–181 is binding to ATP6V1H; the sequence is MDPAEVEEANKGENNSLLHPICQHGMEDEDREV. Residues 165 to 166 carry the Dileucine internalization motif; necessary for CD4 internalization motif; the sequence is LL. Positions 175 to 176 match the Diacidic; necessary for CD4 internalization motif; that stretch reads ED.

It belongs to the lentivirus primate group Nef protein family. In terms of assembly, monomer; cytosolic form. Homodimer; membrane bound form. Interacts with Nef associated p21-activated kinase (PAK2); this interaction activates PAK2. Associates with the Nef-MHC-I-AP1 complex; this complex is required for MHC-I internalization. Interacts (via C-terminus) with host PI3-kinase. Interacts with host PACS1; this interaction seems to be weak. Interacts with host PACS2. Interacts with host LCK and MAPK3; these interactions inhibit the kinase activity of the latter. Interacts with host ATP6V1H; this interaction may play a role in CD4 endocytosis. Associates with the CD4-Nef-AP2 complex; this complex is required for CD4 internalization. Interacts with host AP2 subunit alpha and AP2 subunit sigma2. Interacts with TCR-zeta chain; this interaction up-regulates the Fas ligand (FasL) surface expression. Interacts with host HCK, LYN, and SRC; these interactions activate the Src family kinases. Interacts with MAP3K5; this interaction inhibits the Fas and TNFR-mediated death signals. Interacts with beta-COP and PTE1. Interacts with human RACK1; this increases Nef phosphorylation by PKC. Interacts with TP53; this interaction decreases the half-life of TP53, protecting the infected cell against p53-mediated apoptosis. The virion-associated Nef proteins are cleaved by the viral protease to release the soluble C-terminal core protein. Nef is probably cleaved concomitantly with viral structural proteins on maturation of virus particles. Post-translationally, myristoylated. In terms of processing, phosphorylated on serine residues, probably by host PKCdelta and theta.

It is found in the host cell membrane. Its subcellular location is the virion. It localises to the secreted. The protein localises to the host Golgi apparatus membrane. In terms of biological role, factor of infectivity and pathogenicity, required for optimal virus replication. Alters numerous pathways of T-lymphocyte function and down-regulates immunity surface molecules in order to evade host defense and increase viral infectivity. Alters the functionality of other immunity cells, like dendritic cells, monocytes/macrophages and NK cells. Functionally, in infected CD4(+) T-lymphocytes, down-regulates the surface MHC-I, mature MHC-II, CD4, CD28, CCR5 and CXCR4 molecules. Mediates internalization and degradation of host CD4 through the interaction of with the cytoplasmic tail of CD4, the recruitment of AP-2 (clathrin adapter protein complex 2), internalization through clathrin coated pits, and subsequent transport to endosomes and lysosomes for degradation. Diverts host MHC-I molecules to the trans-Golgi network-associated endosomal compartments by an endocytic pathway to finally target them for degradation. MHC-I down-regulation may involve AP-1 (clathrin adapter protein complex 1) or possibly Src family kinase-ZAP70/Syk-PI3K cascade recruited by PACS2. In consequence infected cells are masked for immune recognition by cytotoxic T-lymphocytes. Decreasing the number of immune receptors also prevents reinfection by more HIV particles (superinfection). Down-regulates host SERINC3 and SERINC5 thereby excluding these proteins from the viral particles. Virion infectivity is drastically higher when SERINC3 or SERINC5 are excluded from the viral envelope, because these host antiviral proteins impair the membrane fusion event necessary for subsequent virion penetration. Bypasses host T-cell signaling by inducing a transcriptional program nearly identical to that of anti-CD3 cell activation. Interaction with TCR-zeta chain up-regulates the Fas ligand (FasL). Increasing surface FasL molecules and decreasing surface MHC-I molecules on infected CD4(+) cells send attacking cytotoxic CD8+ T-lymphocytes into apoptosis. Its function is as follows. Plays a role in optimizing the host cell environment for viral replication without causing cell death by apoptosis. Protects the infected cells from apoptosis in order to keep them alive until the next virus generation is ready to strike. Inhibits the Fas and TNFR-mediated death signals by blocking MAP3K5/ASK1. Decreases the half-life of TP53, protecting the infected cell against p53-mediated apoptosis. Inhibits the apoptotic signals regulated by the Bcl-2 family proteins through the formation of a Nef/PI3-kinase/PAK2 complex that leads to activation of PAK2 and induces phosphorylation of host BAD. In terms of biological role, extracellular Nef protein targets CD4(+) T-lymphocytes for apoptosis by interacting with CXCR4 surface receptors. The sequence is that of Protein Nef from Homo sapiens (Human).